Consider the following 250-residue polypeptide: Acetylglutamate kinase (250 aa).

Substrate-binding positions include glycine 41–glycine 42, arginine 63, and asparagine 156.

This sequence belongs to the acetylglutamate kinase family. ArgB subfamily.

The protein resides in the cytoplasm. It carries out the reaction N-acetyl-L-glutamate + ATP = N-acetyl-L-glutamyl 5-phosphate + ADP. It functions in the pathway amino-acid biosynthesis; L-arginine biosynthesis; N(2)-acetyl-L-ornithine from L-glutamate: step 2/4. Its function is as follows. Catalyzes the ATP-dependent phosphorylation of N-acetyl-L-glutamate. The sequence is that of Acetylglutamate kinase from Listeria monocytogenes serovar 1/2a (strain ATCC BAA-679 / EGD-e).